Reading from the N-terminus, the 43-residue chain is U5-hexatoxin-Mr1a (43 aa).

4 cysteine pairs are disulfide-bonded: C1/C16, C8/C21, C15/C36, and C17/C43.

This sequence belongs to the neurotoxin 35 family. Post-translationally, contains 4 disulfide bonds. In terms of tissue distribution, expressed by the venom gland.

The protein localises to the secreted. Its function is as follows. This toxin blocks the neuromuscular transmission, and also acts on muscle. It exerts an effect of first exciting and then inhibiting the contraction of muscle. This toxin is active only against mammals. This chain is U5-hexatoxin-Mr1a, found in Macrothele raveni (Funnel-web spider).